The following is a 429-amino-acid chain: Bifunctional phosphoribosylaminoimidazole carboxylase/phosphoribosylaminoimidazole succinocarboxamide synthetase (429 aa).

The SAICAR synthetase stretch occupies residues 7–264 (ASIEGYKLGK…WVAEQLADIV (258 aa)). Positions 7-264 (ASIEGYKLGK…WVAEQLADIV (258 aa)) are SAICAR synthetase domain. Residues 265 to 429 (PKKDHLVVIL…DKELRGVRNA (165 aa)) form an AIR carboxylase region. Positions 270-429 (LVVILMGSAS…DKELRGVRNA (160 aa)) are AIR carboxylase domain. Ser335 lines the CO2 pocket.

In the N-terminal section; belongs to the SAICAR synthetase family. The protein in the C-terminal section; belongs to the AIR carboxylase family. Class II subfamily. As to quaternary structure, homooctamer.

The enzyme catalyses 5-amino-1-(5-phospho-D-ribosyl)imidazole-4-carboxylate + L-aspartate + ATP = (2S)-2-[5-amino-1-(5-phospho-beta-D-ribosyl)imidazole-4-carboxamido]succinate + ADP + phosphate + 2 H(+). The catalysed reaction is 5-amino-1-(5-phospho-D-ribosyl)imidazole-4-carboxylate + H(+) = 5-amino-1-(5-phospho-beta-D-ribosyl)imidazole + CO2. Its pathway is purine metabolism; IMP biosynthesis via de novo pathway; 5-amino-1-(5-phospho-D-ribosyl)imidazole-4-carboxamide from 5-amino-1-(5-phospho-D-ribosyl)imidazole-4-carboxylate: step 1/2. It participates in purine metabolism; IMP biosynthesis via de novo pathway; 5-amino-1-(5-phospho-D-ribosyl)imidazole-4-carboxylate from 5-amino-1-(5-phospho-D-ribosyl)imidazole (carboxylase route): step 1/1. Its function is as follows. Bifunctional phosphoribosylaminoimidazole carboxylase and phosphoribosylaminoimidazole succinocarboxamide synthetase catalyzing two reactions of the de novo purine biosynthetic pathway. This is Bifunctional phosphoribosylaminoimidazole carboxylase/phosphoribosylaminoimidazole succinocarboxamide synthetase from Drosophila melanogaster (Fruit fly).